We begin with the raw amino-acid sequence, 267 residues long: Transmembrane protein 106B (267 aa).

At 1–92 the chain is on the cytoplasmic side; it reads MGKALSHVAK…QRLRPRRTKL (92 aa). The chain crosses the membrane as a helical span at residues 93–113; the sequence is YVMASVILCLLLCTLAVFFLF. Topologically, residues 114–267 are lumenal; it reads PRSIDVNYVG…EYSLNTPLTG (154 aa). Residues asparagine 141, asparagine 147, asparagine 160, and asparagine 179 are each glycosylated (N-linked (GlcNAc...) asparagine). Cysteine 210 and cysteine 249 are disulfide-bonded. Asparagine 252 is a glycosylation site (N-linked (GlcNAc...) asparagine).

It belongs to the TMEM106 family.

The protein localises to the late endosome membrane. The protein resides in the lysosome membrane. It is found in the cell membrane. In terms of biological role, in neurons, involved in the transport of late endosomes/lysosomes. May be involved in dendrite morphogenesis and maintenance by regulating lysosomal trafficking. May act as a molecular brake for retrograde transport of late endosomes/lysosomes, possibly via its interaction with MAP6. In motoneurons, may mediate the axonal transport of lysosomes and axonal sorting at the initial segment. It remains unclear whether TMEM106B affects the transport of moving lysosomes in the anterograde or retrograde direction in neurites and whether it is particularly important in the sorting of lysosomes in axons or in dendrites. In neurons, may also play a role in the regulation of lysosomal size and responsiveness to stress. Required for proper lysosomal acidification. This chain is Transmembrane protein 106B (tmem106b), found in Danio rerio (Zebrafish).